A 318-amino-acid polypeptide reads, in one-letter code: NADH-ubiquinone oxidoreductase chain 1 (318 aa).

Helical transmembrane passes span 2–22 (FMINILMLIIPILLAGAFLTL), 70–90 (MFILAPILALGLALTMWIPLP), 100–120 (LGVLFMLAMSSLAVYSILWSG), 147–167 (AIILLSVLLMSGSFTLSTLII), 172–192 (TWLILPAWPLAMMWFISTLAE), 222–242 (LFFMAEYANIIMMNMFTAILF), 253–273 (ELYTINFIIKSLLLTMLFLWI), and 294–314 (LPLTLALCMWHVSLPILTSGI).

This sequence belongs to the complex I subunit 1 family. Core subunit of respiratory chain NADH dehydrogenase (Complex I) which is composed of 45 different subunits.

The protein localises to the mitochondrion inner membrane. The enzyme catalyses a ubiquinone + NADH + 5 H(+)(in) = a ubiquinol + NAD(+) + 4 H(+)(out). Core subunit of the mitochondrial membrane respiratory chain NADH dehydrogenase (Complex I) which catalyzes electron transfer from NADH through the respiratory chain, using ubiquinone as an electron acceptor. Essential for the catalytic activity and assembly of complex I. The sequence is that of NADH-ubiquinone oxidoreductase chain 1 (MT-ND1) from Bos mutus grunniens (Wild yak).